Consider the following 424-residue polypeptide: Phosphomethylpyrimidine synthase (424 aa).

Substrate contacts are provided by residues Asn-66, Met-95, Tyr-124, His-163, 185–187 (SRG), 226–229 (DGMR), and Glu-265. His-269 provides a ligand contact to Zn(2+). Phe-292 provides a ligand contact to substrate. A Zn(2+)-binding site is contributed by His-333. Cys-408, Cys-411, and Cys-415 together coordinate [4Fe-4S] cluster.

This sequence belongs to the ThiC family. [4Fe-4S] cluster serves as cofactor.

The enzyme catalyses 5-amino-1-(5-phospho-beta-D-ribosyl)imidazole + S-adenosyl-L-methionine = 4-amino-2-methyl-5-(phosphooxymethyl)pyrimidine + CO + 5'-deoxyadenosine + formate + L-methionine + 3 H(+). The protein operates within cofactor biosynthesis; thiamine diphosphate biosynthesis. Its function is as follows. Catalyzes the synthesis of the hydroxymethylpyrimidine phosphate (HMP-P) moiety of thiamine from aminoimidazole ribotide (AIR) in a radical S-adenosyl-L-methionine (SAM)-dependent reaction. The chain is Phosphomethylpyrimidine synthase from Thermotoga petrophila (strain ATCC BAA-488 / DSM 13995 / JCM 10881 / RKU-1).